Reading from the N-terminus, the 486-residue chain is 3-dehydroshikimate dehydratase (486 aa).

The catalysed reaction is 3-dehydroshikimate = 3,4-dihydroxybenzoate + H2O. The protein operates within aromatic compound metabolism; 3,4-dihydroxybenzoate biosynthesis; 3,4-dihydroxybenzoate from 3-dehydroquinate: step 2/2. Its function is as follows. Converts dehydroshikimate to protocatechuate. This is 3-dehydroshikimate dehydratase (quiC) from Acinetobacter baylyi (strain ATCC 33305 / BD413 / ADP1).